The primary structure comprises 720 residues: MEFIYQFVWIVPFFPFIASILIGVNLLFFPKSTKSLREIWAIFSILLLSIAMIFSFNILWQQINDNIIYRYLWSWIFDNKIDFKIGFLIDPLTSIMLVLITTVGVLVMIYSDSYMSYDQGYVRFFAYLSLFTASMLGLVLSPNLIQIYIFWELVGMCSYLLIGFWFTRPSAANACQKAFVTNRIGDFGLLLGILGFYWITGSFEFEILFKRFNDLVINHEVNLYFANFCALLLFLGPIAKSAQFPLHIWLPDAMEGPTPISALIHAATMVAAGIFLVARWFPLFQLLPFVMTIISWVGAITAFLGATIALAQTDLKKGLAYSTMSQLGYMMLALGIGSYQAGLFHLITHAYSKALLFLGSGSVIHSVESIVGYSPNKCQNMAFMGGLRKYMPITGITFLLGTFSLCGIPPFACFWSKDEIITDSWLYSSTLGSISLVTAGLTAFYMFRIYFLTFEGDLRVNLNKVAFTYPVSIWGELNLNKKNSNKNKFVLNKYDIFFETDQNENQTDNLSFFSDIKKLKYPKESDNKMLFPLLVLTLPTLFIGFLGAPFPEGQIGSDLLSQWLYPVFKSAEEITSGNWLEFGLNAINSLSVVFSGIFIAFILYGPFSLFPQNLEKNIEFSLEKNLNSFFSFIYNWSYFRGYIDVYYNIVFVKGTRLLAQSLSFFDEWIIDGFVNGFGILTFFEGESIKYLEGGRISFYLFGLIFGMIILLFIGFFGAMF.

16 helical membrane passes run 9 to 29 (WIVP…LLFF), 39 to 59 (IWAI…FNIL), 87 to 107 (FLID…GVLV), 125 to 145 (FAYL…PNLI), 147 to 167 (IYIF…FWFT), 189 to 209 (LLLG…EILF), 221 to 239 (VNLY…GPIA), 258 to 278 (TPIS…FLVA), 286 to 306 (LLPF…FLGA), 327 to 347 (LGYM…FHLI), 354 to 374 (ALLF…VGYS), 395 to 415 (GITF…ACFW), 434 to 454 (ISLV…FLTF), 530 to 550 (LFPL…GAPF), 590 to 610 (LSVV…FSLF), and 700 to 720 (LFGL…GAMF).

The protein belongs to the complex I subunit 5 family. In terms of assembly, NDH is composed of at least 16 different subunits, 5 of which are encoded in the nucleus.

Its subcellular location is the plastid. The protein localises to the chloroplast thylakoid membrane. The catalysed reaction is a plastoquinone + NADH + (n+1) H(+)(in) = a plastoquinol + NAD(+) + n H(+)(out). It carries out the reaction a plastoquinone + NADPH + (n+1) H(+)(in) = a plastoquinol + NADP(+) + n H(+)(out). NDH shuttles electrons from NAD(P)H:plastoquinone, via FMN and iron-sulfur (Fe-S) centers, to quinones in the photosynthetic chain and possibly in a chloroplast respiratory chain. The immediate electron acceptor for the enzyme in this species is believed to be plastoquinone. Couples the redox reaction to proton translocation, and thus conserves the redox energy in a proton gradient. This is NAD(P)H-quinone oxidoreductase subunit 5, chloroplastic (ndhF) from Physcomitrium patens (Spreading-leaved earth moss).